Consider the following 353-residue polypeptide: Protein RecA (353 aa).

68–75 (GPESSGKT) lines the ATP pocket.

It belongs to the RecA family.

It is found in the cytoplasm. In terms of biological role, can catalyze the hydrolysis of ATP in the presence of single-stranded DNA, the ATP-dependent uptake of single-stranded DNA by duplex DNA, and the ATP-dependent hybridization of homologous single-stranded DNAs. It interacts with LexA causing its activation and leading to its autocatalytic cleavage. This is Protein RecA from Roseiflexus sp. (strain RS-1).